A 200-amino-acid chain; its full sequence is MKKKGIFGGTFDPIHNGHLHIAYEALYKLNLDRVIFIPSGNPPHKTDKVITDANIRYKLVKDVIQNEEKFEVSDYELKNQGLSYTYKTLKHFNEKHKDTEWYFITGADCLMQLDSWKNINEVLSLCNFVVFRRSGYSMEDMLKQKERIEKKFNKKIIFLDIPVIDISSTTIRNKIKNRENISYLVPEKARCMVNKMNLYK.

Belongs to the NadD family.

The catalysed reaction is nicotinate beta-D-ribonucleotide + ATP + H(+) = deamido-NAD(+) + diphosphate. It functions in the pathway cofactor biosynthesis; NAD(+) biosynthesis; deamido-NAD(+) from nicotinate D-ribonucleotide: step 1/1. In terms of biological role, catalyzes the reversible adenylation of nicotinate mononucleotide (NaMN) to nicotinic acid adenine dinucleotide (NaAD). This Clostridium novyi (strain NT) protein is Probable nicotinate-nucleotide adenylyltransferase.